The sequence spans 340 residues: Ephrin-B3 (340 aa).

The first 27 residues, 1-27 (MGPPHSGPGGVRVGALLLLGVLGLVSG), serve as a signal peptide directing secretion. The region spanning 28 to 167 (LSLEPVYWNS…TRGMKVLLRV (140 aa)) is the Ephrin RBD domain. The Extracellular portion of the chain corresponds to 28-226 (LSLEPVYWNS…EGPLPPPSMP (199 aa)). Cystine bridges form between cysteine 62–cysteine 104 and cysteine 92–cysteine 156. The segment at 168–225 (GQSPRGGAVPRKPVSEMPMERDRGAAHSLEPGKENLPGDPTSNATSRGAEGPLPPPSM) is disordered. The span at 185-200 (PMERDRGAAHSLEPGK) shows a compositional bias: basic and acidic residues. Asparagine 210 is a glycosylation site (N-linked (GlcNAc...) asparagine). The helical transmembrane segment at 227 to 247 (AVAGAAGGLALLLLGVAGAGG) threads the bilayer. Over 248–340 (AMCWRRRRAK…QSPPNIYYKV (93 aa)) the chain is Cytoplasmic. Residues 254 to 298 (RRAKPSESRHPGPGSFGRGGSLGLGGGGGMGPREAEPGELGIALR) are disordered. A compositionally biased stretch (gly residues) spans 267–284 (GSFGRGGSLGLGGGGGMG). At arginine 271 the chain carries Omega-N-methylarginine. Position 274 is a phosphoserine (serine 274). The short motif at 338-340 (YKV) is the PDZ-binding element.

This sequence belongs to the ephrin family. As to quaternary structure, interacts with GRIP1 and GRIP2. In terms of assembly, (Microbial infection) Interacts with nipah virus and hendra virus glycoprotein. As to expression, highly expressed in brain; expressed in embryonic floor plate, roof plate and hindbrain segments.

The protein resides in the membrane. Functionally, cell surface transmembrane ligand for Eph receptors, a family of receptor tyrosine kinases which are crucial for migration, repulsion and adhesion during neuronal, vascular and epithelial development. Binds promiscuously Eph receptors residing on adjacent cells, leading to contact-dependent bidirectional signaling into neighboring cells. The signaling pathway downstream of the receptor is referred to as forward signaling while the signaling pathway downstream of the ephrin ligand is referred to as reverse signaling. May play a pivotal role in forebrain function. Binds to, and induce the collapse of, commissural axons/growth cones in vitro. May play a role in constraining the orientation of longitudinally projecting axons. In terms of biological role, (Microbial infection) Acts as a receptor for nipah virus and hendra virus. This chain is Ephrin-B3 (EFNB3), found in Homo sapiens (Human).